The chain runs to 385 residues: Putative ESX-1 scaffolding and assembly protein SaeC (385 aa).

It localises to the cytoplasm. Functionally, may be involved in assembly of the ESX-1 / type VII specialized secretion system (T7SS), which exports several proteins including EsxA and EsxB. Involved in DNA conjugation in recipient (MKD8) strain. The sequence is that of Putative ESX-1 scaffolding and assembly protein SaeC from Mycolicibacterium smegmatis (strain ATCC 700084 / mc(2)155) (Mycobacterium smegmatis).